Reading from the N-terminus, the 583-residue chain is ATP-dependent lipid A-core flippase (583 aa).

6 consecutive transmembrane segments (helical) span residues 32-52 (VAFLISIIALVTFSATNTGFL), 71-91 (LHLLPFMLFGLLAIRALAGFI), 115-135 (LMSLPVSFFDAVSAGVVTSKL), 160-180 (ILGMVGYMLYLDWQLTLIFAV), 259-279 (SMVVELLAGVALALVVFYAVG), and 286-306 (FAAFIGALLMLIGPVKTLTSL). In terms of domain architecture, ABC transmembrane type-1 spans 34–312 (FLISIIALVT…LTSLNEELQV (279 aa)). The 237-residue stretch at 344–580 (IVFENVTLQY…DGHYAKLYRK (237 aa)) folds into the ABC transporter domain. 378–385 (GRSGGGKT) lines the ATP pocket.

This sequence belongs to the ABC transporter superfamily. Lipid exporter (TC 3.A.1.106) family. As to quaternary structure, homodimer.

It is found in the cell inner membrane. It carries out the reaction ATP + H2O + lipid A-core oligosaccharideSide 1 = ADP + phosphate + lipid A-core oligosaccharideSide 2.. Its function is as follows. Involved in lipopolysaccharide (LPS) biosynthesis. Translocates lipid A-core from the inner to the outer leaflet of the inner membrane. Transmembrane domains (TMD) form a pore in the inner membrane and the ATP-binding domain (NBD) is responsible for energy generation. The sequence is that of ATP-dependent lipid A-core flippase from Methylobacillus flagellatus (strain ATCC 51484 / DSM 6875 / VKM B-1610 / KT).